An 890-amino-acid polypeptide reads, in one-letter code: Alanine--tRNA ligase (890 aa).

Zn(2+)-binding residues include His-564, His-568, Cys-677, and His-681.

Belongs to the class-II aminoacyl-tRNA synthetase family. The cofactor is Zn(2+).

Its subcellular location is the cytoplasm. It carries out the reaction tRNA(Ala) + L-alanine + ATP = L-alanyl-tRNA(Ala) + AMP + diphosphate. Its function is as follows. Catalyzes the attachment of alanine to tRNA(Ala) in a two-step reaction: alanine is first activated by ATP to form Ala-AMP and then transferred to the acceptor end of tRNA(Ala). Also edits incorrectly charged Ser-tRNA(Ala) and Gly-tRNA(Ala) via its editing domain. In Rhodopseudomonas palustris (strain BisB18), this protein is Alanine--tRNA ligase.